Consider the following 371-residue polypeptide: N-acetyldiaminopimelate deacetylase (371 aa).

Asp68 is an active-site residue. The active-site Proton acceptor is Glu127.

This sequence belongs to the peptidase M20A family. N-acetyldiaminopimelate deacetylase subfamily.

It catalyses the reaction N-acetyl-(2S,6S)-2,6-diaminopimelate + H2O = (2S,6S)-2,6-diaminopimelate + acetate. It functions in the pathway amino-acid biosynthesis; L-lysine biosynthesis via DAP pathway; LL-2,6-diaminopimelate from (S)-tetrahydrodipicolinate (acetylase route): step 3/3. Catalyzes the conversion of N-acetyl-diaminopimelate to diaminopimelate and acetate. The protein is N-acetyldiaminopimelate deacetylase of Listeria innocua serovar 6a (strain ATCC BAA-680 / CLIP 11262).